The sequence spans 335 residues: Biotin synthase (335 aa).

Positions 50 to 279 (ADIQRAALLS…KARVRLSAGR (230 aa)) constitute a Radical SAM core domain. Residues Cys65, Cys69, and Cys72 each contribute to the [4Fe-4S] cluster site. The [2Fe-2S] cluster site is built by Cys110, Cys142, Cys202, and Arg274.

This sequence belongs to the radical SAM superfamily. Biotin synthase family. As to quaternary structure, homodimer. [4Fe-4S] cluster serves as cofactor. Requires [2Fe-2S] cluster as cofactor.

The catalysed reaction is (4R,5S)-dethiobiotin + (sulfur carrier)-SH + 2 reduced [2Fe-2S]-[ferredoxin] + 2 S-adenosyl-L-methionine = (sulfur carrier)-H + biotin + 2 5'-deoxyadenosine + 2 L-methionine + 2 oxidized [2Fe-2S]-[ferredoxin]. The protein operates within cofactor biosynthesis; biotin biosynthesis; biotin from 7,8-diaminononanoate: step 2/2. Functionally, catalyzes the conversion of dethiobiotin (DTB) to biotin by the insertion of a sulfur atom into dethiobiotin via a radical-based mechanism. The sequence is that of Biotin synthase from Methylorubrum extorquens (strain CM4 / NCIMB 13688) (Methylobacterium extorquens).